Here is a 447-residue protein sequence, read N- to C-terminus: Multicopper oxidase mco (447 aa).

A compositionally biased stretch (basic and acidic residues) spans 1 to 25 (MMNMKEDKKNTMDMKNMKHHDERKK). A disordered region spans residues 1–28 (MMNMKEDKKNTMDMKNMKHHDERKKLNS). Residues H107, H109, H147, H149, H375, H378, H380, H428, C429, H430, H434, and M439 each coordinate Cu cation.

The protein belongs to the multicopper oxidase family. Requires Cu cation as cofactor.

It localises to the cytoplasm. In terms of biological role, may be involved in copper homeostasis and oxidative stress response. This Staphylococcus epidermidis (strain ATCC 12228 / FDA PCI 1200) protein is Multicopper oxidase mco (mco).